We begin with the raw amino-acid sequence, 118 residues long: Large ribosomal subunit protein bL20 (118 aa).

This sequence belongs to the bacterial ribosomal protein bL20 family.

Functionally, binds directly to 23S ribosomal RNA and is necessary for the in vitro assembly process of the 50S ribosomal subunit. It is not involved in the protein synthesizing functions of that subunit. This Francisella tularensis subsp. tularensis (strain WY96-3418) protein is Large ribosomal subunit protein bL20.